Here is a 152-residue protein sequence, read N- to C-terminus: Protein-export protein SecB (152 aa).

The protein belongs to the SecB family. As to quaternary structure, homotetramer, a dimer of dimers. One homotetramer interacts with 1 SecA dimer.

The protein resides in the cytoplasm. One of the proteins required for the normal export of preproteins out of the cell cytoplasm. It is a molecular chaperone that binds to a subset of precursor proteins, maintaining them in a translocation-competent state. It also specifically binds to its receptor SecA. The sequence is that of Protein-export protein SecB from Rickettsia conorii (strain ATCC VR-613 / Malish 7).